The sequence spans 2280 residues: Genome polyprotein (2280 aa).

The SF3 helicase domain occupies Glu454 to Lys608. An ATP-binding site is contributed by Gly480–Thr487. Tyr965 carries the O-(5'-phospho-RNA)-tyrosine modification. Residues Gly1054–Glu1202 enclose the Peptidase C24 domain. Residues His1084, Glu1105, and Cys1169 each act as for 3CLpro activity in the active site. Residues Gly1442–Phe1567 form the RdRp catalytic domain. The disordered stretch occupies residues Gly1722–Pro1746. A compositionally biased stretch (polar residues) spans Asn1723–Pro1735.

In terms of assembly, homodimer. Homomultimer. In terms of processing, specific enzymatic cleavages in vivo yield mature proteins. Pro-Pol is first autocatalytically cleaved, then processes the whole polyprotein. VPg is uridylylated by the polymerase and is covalently attached to the 5'-end of the polyadenylated genomic and subgenomic RNAs. This uridylylated form acts as a nucleotide-peptide primer for the polymerase.

Its subcellular location is the virion. It is found in the host cytoplasm. It catalyses the reaction a ribonucleoside 5'-triphosphate + H2O = a ribonucleoside 5'-diphosphate + phosphate + H(+). It carries out the reaction RNA(n) + a ribonucleoside 5'-triphosphate = RNA(n+1) + diphosphate. The catalysed reaction is Endopeptidase with a preference for cleavage when the P1 position is occupied by Glu-|-Xaa and the P1' position is occupied by Gly-|-Yaa.. Functionally, together with NTPase and NS4, initiates the formation of the replication complex. Induces the proliferation of the host smooth ER membranes forming long tubular structures. These remodeled membranes probably form the viral factories that contain the replication complex. Its function is as follows. Displays NTPase activity, but no helicase activity. Induces the formation of convoluted membranes derived from the host ER. These remodeled membranes probably form the viral factories that contain the replication complex. Together with NS2 and NS4, initiates the formation of the replication complex. In terms of biological role, probable key protein responsible for the formation of membrane alterations by the virus. Induces the formation of convoluted membranes derived from the host ER. These remodeled membranes probably form the viral factories that contain the replication complex. Together with NS2 and NTPase, initiates the formation of the replication complex. Viral genome-linked protein is covalently linked to the 5'-end of the positive-strand, negative-strand genomic RNAs and subgenomic RNA. Acts as a genome-linked replication primer. May recruit ribosome to viral RNA thereby promoting viral proteins translation. Interacts with host translation initiation complex to allow the translation of viral proteins. Functionally, protease-polymerase p76 processes the polyprotein: Pro-Pol is first released by autocleavage, then all other proteins are cleaved. Cleaves host translation initiation factor eIF4G1, eIF4G2 and PABP1 thereby inducing a shutdown of host protein synthesis. This shutdown may not prevent viral mRNA from being translated since viral Vpg replaces the cap. It is also an RNA-directed RNA polymerase which replicates genomic and antigenomic viral RNA by recognizing specific signals. Also transcribes a subgenomic mRNA by initiating RNA synthesis internally on antigenomic RNA. This sgRNA codes for structural proteins. Catalyzes the covalent attachment VPg with viral RNAs. Its function is as follows. Capsid protein self assembles to form an icosahedral capsid with a T=3 symmetry, about 38 nm in diameter, and consisting of 180 capsid proteins. The capsid encapsulate the genomic RNA and VP2 proteins. Attaches virion to target cells, inducing endocytosis of the viral particle. Acidification of the endosome induces conformational change of capsid protein thereby injecting virus genomic RNA into host cytoplasm. The chain is Genome polyprotein from Homo sapiens (Human).